Reading from the N-terminus, the 236-residue chain is uncharacterized protein (236 aa).

The chain crosses the membrane as a helical span at residues 52 to 72; that stretch reads FFPYIALFQIIMLIILLILYF. The tract at residues 183–236 is disordered; the sequence is SDKREHDDEELSFTTEMETITTETETSSTIPHLRSLPIKSESSMETTSEETDEE. A compositionally biased stretch (low complexity) spans 196–212; the sequence is TTEMETITTETETSSTI.

It localises to the membrane. This is an uncharacterized protein from Acheta domesticus (House cricket).